Consider the following 151-residue polypeptide: C-C motif chemokine 25 (151 aa).

The signal sequence occupies residues 1 to 23 (MRPWLLACLVACFVGAWAPAIHA). Intrachain disulfides connect cysteine 30-cysteine 58 and cysteine 31-cysteine 75. Residues 93-151 (RNKKDSKPHHSGRRFFQGPQSGVRKLSSGTSRPLLLKFSGPTRSSKRKASLLTTAIPGP) are disordered.

The protein belongs to the intercrine beta (chemokine CC) family.

The protein localises to the secreted. Functionally, potentially involved in T-cell development. Recombinant protein shows chemotactic activity on thymocytes, macrophages, THP-1 cells, and dendritics cells but is inactive on peripheral blood lymphocytes and neutrophils. Binds to CCR9. Binds to atypical chemokine receptor ACKR4 and mediates the recruitment of beta-arrestin (ARRB1/2) to ACKR4. This chain is C-C motif chemokine 25 (CCL25), found in Sus scrofa (Pig).